The chain runs to 240 residues: tRNA pseudouridine synthase A (240 aa).

Asp52 (nucleophile) is an active-site residue. Tyr110 provides a ligand contact to substrate.

The protein belongs to the tRNA pseudouridine synthase TruA family. Homodimer.

The enzyme catalyses uridine(38/39/40) in tRNA = pseudouridine(38/39/40) in tRNA. Formation of pseudouridine at positions 38, 39 and 40 in the anticodon stem and loop of transfer RNAs. This is tRNA pseudouridine synthase A from Solibacter usitatus (strain Ellin6076).